Reading from the N-terminus, the 523-residue chain is GMP synthase [glutamine-hydrolyzing] (523 aa).

The Glutamine amidotransferase type-1 domain occupies 8–205 (KILILDFGSQ…VVNICGCETK (198 aa)). C85 serves as the catalytic Nucleophile. Catalysis depends on residues H179 and E181. The GMPS ATP-PPase domain maps to 206–398 (WTAENIIEDA…LGLPAEMINR (193 aa)). ATP is bound at residue 233-239 (SGGVDSS).

In terms of assembly, homodimer.

It catalyses the reaction XMP + L-glutamine + ATP + H2O = GMP + L-glutamate + AMP + diphosphate + 2 H(+). It participates in purine metabolism; GMP biosynthesis; GMP from XMP (L-Gln route): step 1/1. In terms of biological role, catalyzes the synthesis of GMP from XMP. The polypeptide is GMP synthase [glutamine-hydrolyzing] (Haemophilus influenzae (strain PittGG)).